The following is a 410-amino-acid chain: Cysteine desulfurase (410 aa).

Lys-227 carries the post-translational modification N6-(pyridoxal phosphate)lysine. Residue Cys-365 is the Cysteine persulfide intermediate of the active site.

This sequence belongs to the class-V pyridoxal-phosphate-dependent aminotransferase family. Csd subfamily. As to quaternary structure, homodimer. Interacts with SufE and the SufBCD complex composed of SufB, SufC and SufD. The interaction with SufE is required to mediate the direct transfer of the sulfur atom from the S-sulfanylcysteine. Requires pyridoxal 5'-phosphate as cofactor.

The protein localises to the cytoplasm. The catalysed reaction is (sulfur carrier)-H + L-cysteine = (sulfur carrier)-SH + L-alanine. It catalyses the reaction L-selenocysteine + AH2 = hydrogenselenide + L-alanine + A + H(+). It participates in cofactor biosynthesis; iron-sulfur cluster biosynthesis. Its function is as follows. Cysteine desulfurases mobilize the sulfur from L-cysteine to yield L-alanine, an essential step in sulfur metabolism for biosynthesis of a variety of sulfur-containing biomolecules. Component of the suf operon, which is activated and required under specific conditions such as oxidative stress and iron limitation. Acts as a potent selenocysteine lyase in vitro, that mobilizes selenium from L-selenocysteine. Selenocysteine lyase activity is however unsure in vivo. The sequence is that of Cysteine desulfurase from Wigglesworthia glossinidia brevipalpis.